A 309-amino-acid polypeptide reads, in one-letter code: tRNA-cytidine(32) 2-sulfurtransferase (309 aa).

The PP-loop motif signature appears at 45 to 50; the sequence is SGGKDS. Residues cysteine 120, cysteine 123, and cysteine 211 each contribute to the [4Fe-4S] cluster site.

Belongs to the TtcA family. As to quaternary structure, homodimer. Requires Mg(2+) as cofactor. The cofactor is [4Fe-4S] cluster.

It localises to the cytoplasm. It carries out the reaction cytidine(32) in tRNA + S-sulfanyl-L-cysteinyl-[cysteine desulfurase] + AH2 + ATP = 2-thiocytidine(32) in tRNA + L-cysteinyl-[cysteine desulfurase] + A + AMP + diphosphate + H(+). It participates in tRNA modification. Catalyzes the ATP-dependent 2-thiolation of cytidine in position 32 of tRNA, to form 2-thiocytidine (s(2)C32). The sulfur atoms are provided by the cysteine/cysteine desulfurase (IscS) system. This chain is tRNA-cytidine(32) 2-sulfurtransferase, found in Psychromonas ingrahamii (strain DSM 17664 / CCUG 51855 / 37).